Here is a 1755-residue protein sequence, read N- to C-terminus: Periplakin (1755 aa).

Residues 1–11 (MHSLFRKRNKG) are compositionally biased toward basic residues. The interval 1–20 (MHSLFRKRNKGKYSPTVQTR) is disordered. Ser-14 carries the phosphoserine modification. Coiled coils occupy residues 16 to 125 (TVQT…KQMY) and 182 to 387 (LAKD…QQVV). 3 Spectrin repeats span residues 214-315 (QDYM…SHLK), 321-483 (HQFH…HALQ), and 503-610 (RQLL…EKVD). An SH3 domain is found at 397 to 453 (LKPIPVEALCDFESDQGLISRGYSYTLQKNNGESWELTDSTGKKLAAPAVCFIIPPT). Residue Ser-463 is modified to Phosphoserine. Coiled coils occupy residues 611–819 (VANR…RNSH) and 883–1644 (LSSG…SVAV). 4 positions are modified to phosphoserine: Ser-885, Ser-947, Ser-1583, and Ser-1656. The interval 1556 to 1755 (ELDFLREENH…ELAVLVSGQK (200 aa)) is interacts with BFSP2 and VIM. Plectin repeat units lie at residues 1650–1684 (ENHL…WKMF) and 1699–1734 (VKGP…AAQY).

This sequence belongs to the plakin or cytolinker family. In terms of assembly, homodimer or a heterodimer with EVPL. Found in a complex composed of PPL (via C-terminal linker domain), BFSP1 and BFSP2 in the retinal lens. Within the complex interacts (via C-terminal linker domain) with BFSP2. Interacts with VIM. Binds to the PH domain of AKT1. Interacts with FCGR1A. May interact with PPHLN1. As to expression, expressed in the retinal lens (at protein level).

The protein localises to the cell junction. The protein resides in the desmosome. It localises to the cytoplasm. Its subcellular location is the cytoskeleton. It is found in the cell membrane. Functionally, component of the cornified envelope of keratinocytes. May link the cornified envelope to desmosomes and intermediate filaments. May act as a localization signal in PKB/AKT-mediated signaling. The protein is Periplakin (Ppl) of Mus musculus (Mouse).